We begin with the raw amino-acid sequence, 1258 residues long: uncharacterized protein (1258 aa).

A WD 1 repeat occupies 55-93 (ELASEILGVCWQENGVLAAGISEGTWKRFLAGKQAINAE). The span at 112–128 (GGRTKERKDTGTSRQEK) shows a compositional bias: basic and acidic residues. The interval 112 to 138 (GGRTKERKDTGTSRQEKFLSSSHPHTD) is disordered. 14 WD repeats span residues 640 to 679 (ETLGNILSAAFSPEGQLLATCDTDCHVRVWEVKSGKLLLI), 682 to 721 (GHSNWVRFVVFSPDGEILASCGADENVKLWSVRDGVCIKT), 724 to 763 (GHEHEVFSVAFHPDGETLASASGDKTIKLWDIQDGTCLQT), 766 to 807 (GHTD…RTLK), 809 to 849 (HTGW…KTYI), 850 to 889 (GHTNSVYSIAYSPDSKILVSGSGDRTIKLWDCQTHICIKT), 892 to 931 (GHTNEVCSVAFSPDGQTLACVSLDQSVRLWNCRTGQCLKA), 934 to 975 (GNTD…SSLE), 976 to 1017 (GHTD…QILL), 1019 to 1059 (HTDW…KTLS), 1060 to 1101 (EHSD…GILR), 1103 to 1143 (HSNR…KTLT), 1144 to 1183 (GHTNWVFDIAFSPDGKILASASHDQTVRIWDVNTGKCHHI), and 1186 to 1227 (GHTH…QILR).

This is an uncharacterized protein from Nostoc sp. (strain PCC 7120 / SAG 25.82 / UTEX 2576).